The sequence spans 692 residues: DNA ligase (692 aa).

Residues 34–38 (DAEYD), 83–84 (SL), and glutamate 124 each bind NAD(+). Residue lysine 126 is the N6-AMP-lysine intermediate of the active site. Residues arginine 147, glutamate 193, lysine 310, and lysine 334 each contribute to the NAD(+) site. Zn(2+) is bound by residues cysteine 428, cysteine 431, cysteine 446, and cysteine 452. The BRCT domain occupies 612-692 (AGVAGVSGKT…ALLALLAGNA (81 aa)).

The protein belongs to the NAD-dependent DNA ligase family. LigA subfamily. It depends on Mg(2+) as a cofactor. Mn(2+) serves as cofactor.

The catalysed reaction is NAD(+) + (deoxyribonucleotide)n-3'-hydroxyl + 5'-phospho-(deoxyribonucleotide)m = (deoxyribonucleotide)n+m + AMP + beta-nicotinamide D-nucleotide.. DNA ligase that catalyzes the formation of phosphodiester linkages between 5'-phosphoryl and 3'-hydroxyl groups in double-stranded DNA using NAD as a coenzyme and as the energy source for the reaction. It is essential for DNA replication and repair of damaged DNA. The sequence is that of DNA ligase from Laribacter hongkongensis (strain HLHK9).